Here is a 288-residue protein sequence, read N- to C-terminus: HTH-type transcriptional regulator YofA (288 aa).

One can recognise an HTH lysR-type domain in the interval 1–58 (MESGDLKIFQAVARKGSISKAAESLHYVQSNVTNRIQQLERQLQTQLFYRTNRGMTLT). The segment at residues 18 to 37 (ISKAAESLHYVQSNVTNRIQ) is a DNA-binding region (H-T-H motif).

It belongs to the LysR transcriptional regulatory family.

Its subcellular location is the cytoplasm. In terms of biological role, regulates expression of the cell division protein ftsW, and is essential for cell viability during stationary phase. This is HTH-type transcriptional regulator YofA (yofA) from Bacillus velezensis (strain DSM 23117 / BGSC 10A6 / LMG 26770 / FZB42) (Bacillus amyloliquefaciens subsp. plantarum).